A 1880-amino-acid polypeptide reads, in one-letter code: MGQASSHSENDLFISHLKESLKVRRIRVRKKDLVSFFSFIFKTCPWFPQEGSIDSRVWGRVGDCLNDYYRVFGPETIPITTFNYYNLIRDVLTNQSDSPDIQRLCKEGHKILISHSRPPSRQAPVTITTSEKASSRPPSRAPSTCPSVAIDIGSHDTGQSSLYPNLATLTDPPIQSPHSRAHTPPQHLPLLANSKTLHNSGSQDDQLNPADQADLEEAAAQYNNPDWPQLTNTPALPPFRPPSYVSTAVPPVAVAAPVLHAPTSGVPGSPTAPNLPGVALAKPSGPIDETVSLLDGVKTLVTKLSDLALLPPAGVMAFPVTRSQGQVSSNTTGRASPHPDTHTIPEEEEADSGESDSEDDEEESSEPTEPTYTHSYKRLNLKTIEKIKTAVANYGPTAPFTVALVESLSERWLTPSDWFFLSRAALSGGDNILWKSEYEDISKQFAERTRVRPPPKDGPLKIPGASPYQNNDKQAQFPPGLLTQIQSAGLKAWKRLPQKGAATTSLAKIRQGPDESYSDFVSRLQETADRLFGSGESESSFVKHLAYENANPACQSAIRPFRQKELSTMSPLLWYCSAHAVGLAIGAALQNLAPAQLLEPRPAFAIIVTNPAIFQETAPKKIQPPTQLPTQPNAPQASLIKNLGPTTKCPRCKKGFHWASECRSRLDINGQPIIKQGNLEQGPAPGPHYRDELRGFTVHPPIPPANPCPPSNQPRRYVTDLWRATAGSAGLDLCTTTDTILTTQNSPLTLPVGIYGPLPPQTFGLILAEPALPSKGIQVLPGILDNDFEGEIHIILSTTKDLVTIPKGTRLAQIVILPLQQINSNFHKPYRGASAPGSSDVYWVQQISQQRPTLKLKLNGKLFSGILDTGADATVISYTHWPRNWPLTTVATHLRGIGQATNPQQSAQMLKWEDSEGNNGHITPYVLPNLPVNLWGRDILSQMKLVMCSPNDTVMTQMLSQGYLPGQGLGKNNQGITQPITITPKKDKTGLGFHQNLPRSRAIDIPVPHADKISWKITDPVWVDQWPLTYEKTLAAIALVQEQLAAGHIEPTNSPWNTPIFIIKKKSGSWRLLQDLRAVNKVMVPMGALQPGLPSPVAIPLNYHKIVIDLKDCFFTIPLHPEDRPYFAFSVPQINFQSPMPRYQWKVLPQGMANSPTLCQKFVAAAIAPVRSQWPEAYILHYMDDILLACDSAEAAKACYAHIISCLTSYGLKIAPDKVQVSEPFSYLGFELHHQQVFTPRVCLKTDHLKTLNDFQKLLGDIQWLRPYLKLPTSALVPLNNILKGDPNPLSVRALTPEAKQSLALINKAIQNQSVQQISYNLPLVLLLLPTPHTPTAVFWQPNGTDPTKNGSPLLWLHLPASPSKVLLTYPSLLAMLIIKGRYTGRQLFGRDPHSIIIPYTQDQLTWLLQTSDEWAIALSSFTGDIDNHYPSDPVIQFAKLHQFIFPKITKCAPIPQATLVFTDGSSNGIAAYVIDNQPISIKSPYLSAQLVELYAILQVFTVLAHQPFNLYTDSAYIAQSVPLLETVPFIKSSTNATPLFSKLQQLILNRQHPFFIGHLRAHLNLPGPLAEGNALADAATQIFPIISDPIHEATQAHTLHHLNAHTLRLLYKITREQARDIVKACKQCVVATPVPHLGVNPRGLVPNAIWQMDVTHFTPFGKQRFVHVTVDTFSGFILATPQTGEASKNVISHVIHCLATIGKPHTIKTDNGPGYTGKNFQDFCQKLQIKHVTGIPYNPQGQGVVERAHQTLKNALNRLARSPLGFSMQQPRNLLSHALFQLNFLQLDSQGRSAADRLWHPQTSQQHATVMWRDPLTSVWKGPDPVLIWGRGSACIYDQKEDGPRWLPERLIRHINNQTAPLCDRPSNPNTAPGPKGSP.

G2 carries N-myristoyl glycine; by host lipidation. Disordered regions lie at residues 115-208 (HSRP…DQLN), 323-376 (SQGQ…THSY), and 446-469 (AERT…SPYQ). 3 stretches are compositionally biased toward polar residues: residues 117-132 (RPPS…TSEK), 193-206 (NSKT…QDDQ), and 323-334 (SQGQVSSNTTGR). A compositionally biased stretch (acidic residues) spans 346-366 (EEEEADSGESDSEDDEEESSE). Over residues 446–459 (AERTRVRPPPKDGP) the composition is skewed to basic and acidic residues. Residues 863-939 (FSGILDTGAD…LPVNLWGRDI (77 aa)) enclose the Peptidase A2 domain. D868 acts as the Protease; shared with dimeric partner in catalysis. The G-patch domain occupies 950–996 (PNDTVMTQMLSQGYLPGQGLGKNNQGITQPITITPKKDKTGLGFHQN). Positions 1044 to 1232 (LAAGHIEPTN…EPFSYLGFEL (189 aa)) constitute a Reverse transcriptase domain. 7 residues coordinate Mg(2+): D1109, D1184, D1185, D1464, E1493, D1514, and D1578. The 132-residue stretch at 1455–1586 (IPQATLVFTD…ADAATQIFPI (132 aa)) folds into the RNase H type-1 domain. Residues 1589-1630 (DPIHEATQAHTLHHLNAHTLRLLYKITREQARDIVKACKQCV) form an Integrase-type zinc finger. The Zn(2+) site is built by H1598, H1602, C1626, and C1629. Positions 1643 to 1804 (RGLVPNAIWQ…AADRLWHPQT (162 aa)) constitute an Integrase catalytic domain. Residues D1654, D1711, and E1747 each contribute to the Mg(2+) site. The integrase-type DNA-binding region spans 1809–1858 (ATVMWRDPLTSVWKGPDPVLIWGRGSACIYDQKEDGPRWLPERLIRHINN). A disordered region spans residues 1859–1880 (QTAPLCDRPSNPNTAPGPKGSP).

In terms of assembly, homodimer. Interacts with the G-patch peptide. As to quaternary structure, interacts with the reverse transcriptase/ribonuclease H. In terms of assembly, homotrimer. Mg(2+) is required as a cofactor. Myristoylated. Myristoylation of the matrix (MA) domain mediates the transport and binding of Gag polyproteins to the host plasma membrane and is required for the assembly of viral particles. In terms of processing, specific enzymatic cleavages in vivo yield mature proteins. Post-translationally, released by autocatalytic processing. The protease can undergo further autoprocessing to yield 2 shorter but enzymatically active forms of 12 kDa and 13 kDa.

It is found in the virion. It carries out the reaction DNA(n) + a 2'-deoxyribonucleoside 5'-triphosphate = DNA(n+1) + diphosphate. It catalyses the reaction Endonucleolytic cleavage to 5'-phosphomonoester.. The catalysed reaction is dUTP + H2O = dUMP + diphosphate + H(+). Functionally, matrix protein. Capsid protein. Its function is as follows. Matrix protein p10: Matrix protein. In terms of biological role, nucleocapsid protein p14: Nucleocapsid protein. Functionally, capsid protein p27: capsid protein. The aspartyl protease mediates proteolytic cleavages of Gag and Gag-Pol polyproteins during or shortly after the release of the virion from the plasma membrane. Cleavages take place as an ordered, step-wise cascade to yield mature proteins. This process is called maturation. Displays maximal activity during the budding process just prior to particle release from the cell. Its function is as follows. Enhances the activity of the reverse transcriptase. May be part of the mature RT. In terms of biological role, RT is a multifunctional enzyme that converts the viral dimeric RNA genome into dsDNA in the cytoplasm, shortly after virus entry into the cell. This enzyme displays a DNA polymerase activity that can copy either DNA or RNA templates, and a ribonuclease H (RNase H) activity that cleaves the RNA strand of RNA-DNA heteroduplexes in a partially processive 3' to 5' endonucleasic mode. Conversion of viral genomic RNA into dsDNA requires many steps. A tRNA binds to the primer-binding site (PBS) situated at the 5' end of the viral RNA. RT uses the 3' end of the tRNA primer to perfom a short round of RNA-dependent minus-strand DNA synthesis. The reading proceeds through the U5 region and ends after the repeated (R) region which is present at both ends of viral RNA. The portion of the RNA-DNA heteroduplex is digested by the RNase H, resulting in a ssDNA product attached to the tRNA primer. This ssDNA/tRNA hybridizes with the identical R region situated at the 3' end of viral RNA. This template exchange, known as minus-strand DNA strong stop transfer, can be either intra- or intermolecular. RT uses the 3' end of this newly synthesized short ssDNA to perfom the RNA-dependent minus-strand DNA synthesis of the whole template. RNase H digests the RNA template except for a polypurine tract (PPT) situated at the 5' end of the genome. It is not clear if both polymerase and RNase H activities are simultaneous. RNase H probably can proceed both in a polymerase-dependent (RNA cut into small fragments by the same RT performing DNA synthesis) and a polymerase-independent mode (cleavage of remaining RNA fragments by free RTs). Secondly, RT performs DNA-directed plus-strand DNA synthesis using the PPT that has not been removed by RNase H as primers. PPT and tRNA primers are then removed by RNase H. The 3' and 5' ssDNA PBS regions hybridize to form a circular dsDNA intermediate. Strand displacement synthesis by RT to the PBS and PPT ends produces a blunt ended, linear dsDNA copy of the viral genome that includes long terminal repeats (LTRs) at both ends. Functionally, catalyzes viral DNA integration into the host chromosome, by performing a series of DNA cutting and joining reactions. The sequence is that of Gag-Pro-Pol polyprotein (pol) from Mammalia (SMRV-H).